A 507-amino-acid chain; its full sequence is ATP synthase subunit alpha (507 aa).

Residue 169-176 participates in ATP binding; the sequence is GDRQTGKT.

Belongs to the ATPase alpha/beta chains family. In terms of assembly, F-type ATPases have 2 components, CF(1) - the catalytic core - and CF(0) - the membrane proton channel. CF(1) has five subunits: alpha(3), beta(3), gamma(1), delta(1), epsilon(1). CF(0) has three main subunits: a(1), b(2) and c(9-12). The alpha and beta chains form an alternating ring which encloses part of the gamma chain. CF(1) is attached to CF(0) by a central stalk formed by the gamma and epsilon chains, while a peripheral stalk is formed by the delta and b chains.

It is found in the cell inner membrane. It carries out the reaction ATP + H2O + 4 H(+)(in) = ADP + phosphate + 5 H(+)(out). Its function is as follows. Produces ATP from ADP in the presence of a proton gradient across the membrane. The alpha chain is a regulatory subunit. This is ATP synthase subunit alpha from Magnetococcus marinus (strain ATCC BAA-1437 / JCM 17883 / MC-1).